The following is a 202-amino-acid chain: Imidazoleglycerol-phosphate dehydratase (202 aa).

This sequence belongs to the imidazoleglycerol-phosphate dehydratase family.

Its subcellular location is the cytoplasm. It catalyses the reaction D-erythro-1-(imidazol-4-yl)glycerol 3-phosphate = 3-(imidazol-4-yl)-2-oxopropyl phosphate + H2O. The protein operates within amino-acid biosynthesis; L-histidine biosynthesis; L-histidine from 5-phospho-alpha-D-ribose 1-diphosphate: step 6/9. This is Imidazoleglycerol-phosphate dehydratase from Rhizobium meliloti (strain 1021) (Ensifer meliloti).